Here is a 318-residue protein sequence, read N- to C-terminus: uncharacterized protein (318 aa).

Residues 67-157 (LAFDELEKEK…SLKAIQTSQE (91 aa)) adopt a coiled-coil conformation. The disordered stretch occupies residues 172 to 318 (ESTNKVEKNA…KGFFARLFNL (147 aa)). 2 stretches are compositionally biased toward basic and acidic residues: residues 175 to 193 (NKVE…KDSK) and 219 to 236 (KVDK…EKAS). Positions 237 to 248 (VEQSKNGNAAET) are enriched in polar residues. Composition is skewed to basic and acidic residues over residues 249–274 (SNKE…HAEA) and 300–310 (SEPKPQEEKKG).

This is an uncharacterized protein from Staphylococcus aureus (strain MW2).